The chain runs to 438 residues: Aspartyl protease 25 (438 aa).

The signal sequence occupies residues 1–23; sequence MAATTTIPLLLLLLAATVAAAAA. One can recognise a Peptidase A1 domain in the interval 79–433; it reads YVVRAGLGSP…DVANSRVGFA (355 aa). Asp97 is an active-site residue. Cys107 and Cys113 are joined by a disulfide. N-linked (GlcNAc...) asparagine glycosylation is found at Asn123, Asn193, and Asn282. The active site involves Asp313. Cys352 and Cys394 are oxidised to a cystine.

Belongs to the peptidase A1 family.

Functionally, anther-specific aspartic protease involved in tapetal programmed cell death (PCD). Directly regulated by the transcription factor EAT1/DTD in anthers during tapetum PCD and degeneration. In Oryza sativa subsp. japonica (Rice), this protein is Aspartyl protease 25.